A 310-amino-acid polypeptide reads, in one-letter code: Tagatose-6-phosphate kinase (310 aa).

This sequence belongs to the carbohydrate kinase PfkB family. LacC subfamily.

The enzyme catalyses D-tagatofuranose 6-phosphate + ATP = D-tagatofuranose 1,6-bisphosphate + ADP + H(+). It functions in the pathway carbohydrate metabolism; D-tagatose 6-phosphate degradation; D-glyceraldehyde 3-phosphate and glycerone phosphate from D-tagatose 6-phosphate: step 1/2. The sequence is that of Tagatose-6-phosphate kinase from Streptococcus agalactiae serotype V (strain ATCC BAA-611 / 2603 V/R).